We begin with the raw amino-acid sequence, 66 residues long: Large ribosomal subunit protein bL35 (66 aa).

Basic residues predominate over residues 1-16; the sequence is MPKQKTHRASAKRFKR. A disordered region spans residues 1–20; that stretch reads MPKQKTHRASAKRFKRTGNG.

It belongs to the bacterial ribosomal protein bL35 family.

The sequence is that of Large ribosomal subunit protein bL35 from Lactococcus lactis subsp. lactis (strain IL1403) (Streptococcus lactis).